The following is a 259-amino-acid chain: Undecaprenyl-diphosphatase 3 (259 aa).

8 helical membrane passes run 1 to 21, 39 to 59, 71 to 91, 99 to 119, 133 to 153, 174 to 194, 208 to 228, and 239 to 259; these read MNWL…FLPI, AGLF…FIYY, FSKL…IGLL, ISKT…FLYM, ITYK…FPAI, AYFS…LQFV, SLIV…SWMI, and FAYY…TDVF.

The protein belongs to the UppP family.

Its subcellular location is the cell membrane. It catalyses the reaction di-trans,octa-cis-undecaprenyl diphosphate + H2O = di-trans,octa-cis-undecaprenyl phosphate + phosphate + H(+). Catalyzes the dephosphorylation of undecaprenyl diphosphate (UPP). Confers resistance to bacitracin. This Bacillus cereus (strain ATCC 14579 / DSM 31 / CCUG 7414 / JCM 2152 / NBRC 15305 / NCIMB 9373 / NCTC 2599 / NRRL B-3711) protein is Undecaprenyl-diphosphatase 3.